Consider the following 383-residue polypeptide: Cytochrome b (383 aa).

Transmembrane regions (helical) follow at residues 31–51 (FGSL…FLAM), 75–97 (WLMR…VHIF), 112–132 (LWCS…MGYV), and 178–198 (FFSL…IHLI). Heme b contacts are provided by H81 and H95. 2 residues coordinate heme b: H182 and H196. H201 is an a ubiquinone binding site. 4 helical membrane-spanning segments follow: residues 224 to 244 (FYTK…IFIF), 288 to 308 (IGGV…PFTN), 320 to 340 (IFKV…WVGQ), and 347 to 367 (YTEI…IIIP).

This sequence belongs to the cytochrome b family. As to quaternary structure, fungal cytochrome b-c1 complex contains 10 subunits; 3 respiratory subunits, 2 core proteins and 5 low-molecular weight proteins. Cytochrome b-c1 complex is a homodimer. Heme b is required as a cofactor.

It is found in the mitochondrion inner membrane. Component of the ubiquinol-cytochrome c reductase complex (complex III or cytochrome b-c1 complex) that is part of the mitochondrial respiratory chain. The b-c1 complex mediates electron transfer from ubiquinol to cytochrome c. Contributes to the generation of a proton gradient across the mitochondrial membrane that is then used for ATP synthesis. The polypeptide is Cytochrome b (cob) (Phytophthora megasperma (Potato pink rot fungus)).